The chain runs to 384 residues: S-adenosylmethionine synthase (384 aa).

Position 15 (H15) interacts with ATP. D17 lines the Mg(2+) pocket. Position 43 (E43) interacts with K(+). L-methionine-binding residues include E56 and Q99. Residues 99-109 form a flexible loop region; that stretch reads QSSDINQGVDR. Residues 164-166, 230-231, D239, 245-246, A262, and K266 contribute to the ATP site; these read DAK, RF, and RK. Position 239 (D239) interacts with L-methionine. An L-methionine-binding site is contributed by K270.

This sequence belongs to the AdoMet synthase family. Homotetramer; dimer of dimers. Mg(2+) is required as a cofactor. It depends on K(+) as a cofactor.

It is found in the cytoplasm. It catalyses the reaction L-methionine + ATP + H2O = S-adenosyl-L-methionine + phosphate + diphosphate. Its pathway is amino-acid biosynthesis; S-adenosyl-L-methionine biosynthesis; S-adenosyl-L-methionine from L-methionine: step 1/1. Catalyzes the formation of S-adenosylmethionine (AdoMet) from methionine and ATP. The overall synthetic reaction is composed of two sequential steps, AdoMet formation and the subsequent tripolyphosphate hydrolysis which occurs prior to release of AdoMet from the enzyme. In Histophilus somni (strain 129Pt) (Haemophilus somnus), this protein is S-adenosylmethionine synthase.